Consider the following 233-residue polypeptide: tRNA (guanine-N(7)-)-methyltransferase (233 aa).

The segment at 1–22 (MIDENHPMRAAGNFFGRRHGKP) is disordered. Residues Glu-64, Glu-89, Asp-116, and Asp-138 each contribute to the S-adenosyl-L-methionine site. Residue Asp-138 is part of the active site. Substrate contacts are provided by residues Lys-142, Asp-174, and 212 to 215 (TRYE).

The protein belongs to the class I-like SAM-binding methyltransferase superfamily. TrmB family.

The enzyme catalyses guanosine(46) in tRNA + S-adenosyl-L-methionine = N(7)-methylguanosine(46) in tRNA + S-adenosyl-L-homocysteine. It participates in tRNA modification; N(7)-methylguanine-tRNA biosynthesis. Functionally, catalyzes the formation of N(7)-methylguanine at position 46 (m7G46) in tRNA. This chain is tRNA (guanine-N(7)-)-methyltransferase, found in Brucella melitensis biotype 1 (strain ATCC 23456 / CCUG 17765 / NCTC 10094 / 16M).